Reading from the N-terminus, the 345-residue chain is Phosphoribosylformylglycinamidine cyclo-ligase (345 aa).

This sequence belongs to the AIR synthase family.

Its subcellular location is the cytoplasm. It carries out the reaction 2-formamido-N(1)-(5-O-phospho-beta-D-ribosyl)acetamidine + ATP = 5-amino-1-(5-phospho-beta-D-ribosyl)imidazole + ADP + phosphate + H(+). The protein operates within purine metabolism; IMP biosynthesis via de novo pathway; 5-amino-1-(5-phospho-D-ribosyl)imidazole from N(2)-formyl-N(1)-(5-phospho-D-ribosyl)glycinamide: step 2/2. The sequence is that of Phosphoribosylformylglycinamidine cyclo-ligase from Limosilactobacillus reuteri (strain DSM 20016) (Lactobacillus reuteri).